Here is a 126-residue protein sequence, read N- to C-terminus: Arginine decarboxylase proenzyme (126 aa).

The active-site Schiff-base intermediate with substrate; via pyruvic acid is S74. Residue S74 is modified to Pyruvic acid (Ser); by autocatalysis. H79 (proton acceptor; for processing activity) is an active-site residue. The active-site Proton donor; for catalytic activity is C94.

This sequence belongs to the prokaryotic AdoMetDC family. Type 1 subfamily. In terms of assembly, heterooctamer of four alpha and four beta chains arranged as a tetramer of alpha/beta heterodimers. It depends on pyruvate as a cofactor. Is synthesized initially as an inactive proenzyme. Formation of the active enzyme involves a self-maturation process in which the active site pyruvoyl group is generated from an internal serine residue via an autocatalytic post-translational modification. Two non-identical subunits are generated from the proenzyme in this reaction, and the pyruvate is formed at the N-terminus of the alpha chain, which is derived from the carboxyl end of the proenzyme. The post-translation cleavage follows an unusual pathway, termed non-hydrolytic serinolysis, in which the side chain hydroxyl group of the serine supplies its oxygen atom to form the C-terminus of the beta chain, while the remainder of the serine residue undergoes an oxidative deamination to produce ammonia and the pyruvoyl group blocking the N-terminus of the alpha chain.

It carries out the reaction L-arginine + H(+) = agmatine + CO2. Its pathway is amine and polyamine biosynthesis; agmatine biosynthesis; agmatine from L-arginine: step 1/1. In terms of biological role, specifically catalyzes the decarboxylation of L-arginine to agmatine. Has no S-adenosylmethionine decarboxylase (AdoMetDC) activity. The protein is Arginine decarboxylase proenzyme of Pyrobaculum aerophilum (strain ATCC 51768 / DSM 7523 / JCM 9630 / CIP 104966 / NBRC 100827 / IM2).